The sequence spans 272 residues: Undecaprenyl-diphosphatase (272 aa).

Transmembrane regions (helical) follow at residues 39–59, 87–107, 113–133, 145–165, 188–208, 220–240, and 251–271; these read SGLT…FVYF, WMIV…EQPI, SSPL…GLTD, ITLG…VPGV, FSFL…GLHL, PMLV…AFLL, and FVWY…VGLL.

It belongs to the UppP family.

It is found in the cell inner membrane. It carries out the reaction di-trans,octa-cis-undecaprenyl diphosphate + H2O = di-trans,octa-cis-undecaprenyl phosphate + phosphate + H(+). Its function is as follows. Catalyzes the dephosphorylation of undecaprenyl diphosphate (UPP). Confers resistance to bacitracin. In Trichlorobacter lovleyi (strain ATCC BAA-1151 / DSM 17278 / SZ) (Geobacter lovleyi), this protein is Undecaprenyl-diphosphatase.